A 634-amino-acid chain; its full sequence is DNA-directed RNA polymerase subunit gamma (634 aa).

Residues C74, C76, C89, and C92 each coordinate Zn(2+). Mg(2+) contacts are provided by D471, D473, and D475.

The protein belongs to the RNA polymerase beta' chain family. RpoC1 subfamily. In cyanobacteria the RNAP catalytic core is composed of 2 alpha, 1 beta, 1 beta', 1 gamma and 1 omega subunit. When a sigma factor is associated with the core the holoenzyme is formed, which can initiate transcription. The cofactor is Mg(2+). Zn(2+) is required as a cofactor.

The catalysed reaction is RNA(n) + a ribonucleoside 5'-triphosphate = RNA(n+1) + diphosphate. Its function is as follows. DNA-dependent RNA polymerase catalyzes the transcription of DNA into RNA using the four ribonucleoside triphosphates as substrates. The protein is DNA-directed RNA polymerase subunit gamma of Synechococcus sp. (strain WH7803).